A 192-amino-acid chain; its full sequence is Acireductone dioxygenase 2 (192 aa).

Positions 99, 101, 105, and 144 each coordinate Fe(2+). Histidine 99, histidine 101, glutamate 105, and histidine 144 together coordinate Ni(2+).

It belongs to the acireductone dioxygenase (ARD) family. It depends on Fe(2+) as a cofactor. Requires Ni(2+) as cofactor.

It is found in the cytoplasm. The protein localises to the nucleus. The catalysed reaction is 1,2-dihydroxy-5-(methylsulfanyl)pent-1-en-3-one + O2 = 4-methylsulfanyl-2-oxobutanoate + formate + 2 H(+). It carries out the reaction 1,2-dihydroxy-5-(methylsulfanyl)pent-1-en-3-one + O2 = 3-(methylsulfanyl)propanoate + CO + formate + 2 H(+). The protein operates within amino-acid biosynthesis; L-methionine biosynthesis via salvage pathway; L-methionine from S-methyl-5-thio-alpha-D-ribose 1-phosphate: step 5/6. Its function is as follows. Catalyzes 2 different reactions between oxygen and the acireductone 1,2-dihydroxy-3-keto-5-methylthiopentene (DHK-MTPene) depending upon the metal bound in the active site. Fe-containing acireductone dioxygenase (Fe-ARD) produces formate and 2-keto-4-methylthiobutyrate (KMTB), the alpha-ketoacid precursor of methionine in the methionine recycle pathway. Ni-containing acireductone dioxygenase (Ni-ARD) produces methylthiopropionate, carbon monoxide and formate, and does not lie on the methionine recycle pathway. The sequence is that of Acireductone dioxygenase 2 (ARD2) from Arabidopsis thaliana (Mouse-ear cress).